A 37-amino-acid chain; its full sequence is Large ribosomal subunit protein bL36 (37 aa).

It belongs to the bacterial ribosomal protein bL36 family.

This chain is Large ribosomal subunit protein bL36, found in Acidothermus cellulolyticus (strain ATCC 43068 / DSM 8971 / 11B).